The following is a 616-amino-acid chain: uncharacterized protein (616 aa).

The protein belongs to the UbiD family.

This is an uncharacterized protein from Helicobacter pylori (strain J99 / ATCC 700824) (Campylobacter pylori J99).